The following is a 456-amino-acid chain: UDP-N-acetylglucosamine 1-carboxyvinyltransferase (456 aa).

Lysine 34–asparagine 35 serves as a coordination point for phosphoenolpyruvate. Arginine 104 provides a ligand contact to UDP-N-acetyl-alpha-D-glucosamine. Cysteine 128 serves as the catalytic Proton donor. Cysteine 128 is modified (2-(S-cysteinyl)pyruvic acid O-phosphothioketal). Residues aspartate 319 and isoleucine 341 each contribute to the UDP-N-acetyl-alpha-D-glucosamine site.

It belongs to the EPSP synthase family. MurA subfamily.

It is found in the cytoplasm. The catalysed reaction is phosphoenolpyruvate + UDP-N-acetyl-alpha-D-glucosamine = UDP-N-acetyl-3-O-(1-carboxyvinyl)-alpha-D-glucosamine + phosphate. It participates in cell wall biogenesis; peptidoglycan biosynthesis. Cell wall formation. Adds enolpyruvyl to UDP-N-acetylglucosamine. This is UDP-N-acetylglucosamine 1-carboxyvinyltransferase from Prochlorococcus marinus (strain MIT 9301).